A 174-amino-acid polypeptide reads, in one-letter code: Membrane protein NfeD2 (174 aa).

The next 3 membrane-spanning stretches (helical) occupy residues 16–36 (LIIA…FSGL), 47–67 (LVLS…LVLP), and 72–92 (LIAL…HIFV).

Belongs to the NfeD family.

It localises to the cell membrane. Its subcellular location is the membrane raft. In terms of biological role, plays a role in assembly of FloT membrane rafts, probably recruited to rafts by FloT. This chain is Membrane protein NfeD2, found in Bacillus subtilis (strain 168).